The following is a 379-amino-acid chain: Gonadotropin-releasing hormone II receptor (379 aa).

At 1–40 the chain is on the extracellular side; sequence MSAGNGTPWGSAVGEEAWAGSGVAVEGSELPTFSTAAKVR. Residues 41 to 60 traverse the membrane as a helical segment; that stretch reads VGVTIVLFVSSAGGNLAVLW. At 61-76 the chain is on the cytoplasmic side; it reads SVTRPQPSQLRPSPVR. The chain crosses the membrane as a helical span at residues 77–96; it reads TLFAHLAAADLLVTFVVMPL. The Extracellular segment spans residues 97-114; sequence DATWNITVQWLAGDIACR. The N-linked (GlcNAc...) asparagine glycan is linked to asparagine 101. Cysteines 113 and 188 form a disulfide. A helical membrane pass occupies residues 115 to 136; that stretch reads TLMFLKLMAMYSAAFLPVVIGL. At 137–160 the chain is on the cytoplasmic side; sequence DRQAAVLNPLGSRSGVRKLLGAAW. A helical transmembrane segment spans residues 161–178; that stretch reads GLSFLLALPQLFLFHTVH. Residues 179–204 are Extracellular-facing; sequence RAGPVPFTQCVTKGSFKARWQETTYN. A helical membrane pass occupies residues 205–224; that stretch reads LFTFCCLFLLPLIAMAICYS. Residues 225 to 278 are Cytoplasmic-facing; sequence RIVLSVSSPQTRKGSHAPAGEFALRRSFDNRPRVCLRALRLALLILLTFILCWT. The chain crosses the membrane as a helical span at residues 279–297; it reads PYYLLGLWYWFSPTMLTEV. Over 298–303 the chain is Extracellular; the sequence is PPSLSH. Residues 304–323 form a helical membrane-spanning segment; it reads ILFLFGLLNAPLDPLLYGAF. Residues 324–379 are Cytoplasmic-facing; sequence TFGCRRGHQELSIDSSKEGSGRMLQQEIHALRQQEVQKTVTSRSAGETKGISITSI.

This sequence belongs to the G-protein coupled receptor 1 family. Post-translationally, phosphorylated on the C-terminal cytoplasmic tail.

Its subcellular location is the cell membrane. Its function is as follows. Receptor for gonadotropin releasing hormone II (GnRH II). This receptor mediates its action by association with G proteins that activate a phosphatidylinositol-calcium second messenger system. The polypeptide is Gonadotropin-releasing hormone II receptor (GNRHR2) (Chlorocebus aethiops (Green monkey)).